The chain runs to 293 residues: 4-hydroxy-tetrahydrodipicolinate synthase (293 aa).

T47 is a pyruvate binding site. Catalysis depends on Y136, which acts as the Proton donor/acceptor. The Schiff-base intermediate with substrate role is filled by K164. I206 contacts pyruvate.

Belongs to the DapA family. Homotetramer; dimer of dimers.

It is found in the cytoplasm. It carries out the reaction L-aspartate 4-semialdehyde + pyruvate = (2S,4S)-4-hydroxy-2,3,4,5-tetrahydrodipicolinate + H2O + H(+). It participates in amino-acid biosynthesis; L-lysine biosynthesis via DAP pathway; (S)-tetrahydrodipicolinate from L-aspartate: step 3/4. In terms of biological role, catalyzes the condensation of (S)-aspartate-beta-semialdehyde [(S)-ASA] and pyruvate to 4-hydroxy-tetrahydrodipicolinate (HTPA). The protein is 4-hydroxy-tetrahydrodipicolinate synthase of Listeria innocua serovar 6a (strain ATCC BAA-680 / CLIP 11262).